We begin with the raw amino-acid sequence, 581 residues long: Neither inactivation nor afterpotential protein G (581 aa).

The N-terminal stretch at 1 to 26 (MGMKFQKILVLAGIVIGFLSIIVVLA) is a signal peptide. 48–77 (DYVIVGGGTGGSTLTSLLAKNSNGSVLLIE) is a binding site for FAD. Residues N70, N156, N404, and N464 are each glycosylated (N-linked (GlcNAc...) asparagine). The Proton acceptor role is filled by H516.

The protein belongs to the GMC oxidoreductase family. The cofactor is FAD.

The protein localises to the secreted. Its function is as follows. Oxidoreductase involved in biosynthesis of 3-hydroxyretinal, a chromophore for rhodopsin Rh1. Not responsible for the initial hydroxylation of the retinal ring but rather acts in a subsequent step in chromophore production. May catalyze the conversion of (3R)-3-hydroxyretinol to the 3S enantiomer. In Drosophila melanogaster (Fruit fly), this protein is Neither inactivation nor afterpotential protein G (ninaG).